A 115-amino-acid chain; its full sequence is Large ribosomal subunit protein uL18 (115 aa).

The interval 1 to 20 (MKYTKQEARKRRHYRVRSKV) is disordered. Positions 8-18 (ARKRRHYRVRS) are enriched in basic residues.

The protein belongs to the universal ribosomal protein uL18 family. In terms of assembly, part of the 50S ribosomal subunit; part of the 5S rRNA/L5/L18/L25 subcomplex. Contacts the 5S and 23S rRNAs.

This is one of the proteins that bind and probably mediate the attachment of the 5S RNA into the large ribosomal subunit, where it forms part of the central protuberance. The sequence is that of Large ribosomal subunit protein uL18 from Mesoplasma florum (strain ATCC 33453 / NBRC 100688 / NCTC 11704 / L1) (Acholeplasma florum).